Here is a 197-residue protein sequence, read N- to C-terminus: dITP/XTP pyrophosphatase (197 aa).

A substrate-binding site is contributed by 8-13 (TGNPGK). Residues Glu-40 and Asp-69 each coordinate Mg(2+). Asp-69 (proton acceptor) is an active-site residue. Residues Ser-70, 154–157 (FGYD), Lys-177, and 182–183 (HR) contribute to the substrate site.

The protein belongs to the HAM1 NTPase family. Homodimer. The cofactor is Mg(2+).

The enzyme catalyses XTP + H2O = XMP + diphosphate + H(+). The catalysed reaction is dITP + H2O = dIMP + diphosphate + H(+). It carries out the reaction ITP + H2O = IMP + diphosphate + H(+). Functionally, pyrophosphatase that catalyzes the hydrolysis of nucleoside triphosphates to their monophosphate derivatives, with a high preference for the non-canonical purine nucleotides XTP (xanthosine triphosphate), dITP (deoxyinosine triphosphate) and ITP. Seems to function as a house-cleaning enzyme that removes non-canonical purine nucleotides from the nucleotide pool, thus preventing their incorporation into DNA/RNA and avoiding chromosomal lesions. This Yersinia pseudotuberculosis serotype I (strain IP32953) protein is dITP/XTP pyrophosphatase.